The sequence spans 169 residues: Ribosome maturation factor RimM (169 aa).

One can recognise a PRC barrel domain in the interval 92–166 (NKEYYWNDIF…IVIDLTNLNN (75 aa)).

Belongs to the RimM family. Binds ribosomal protein uS19.

The protein resides in the cytoplasm. An accessory protein needed during the final step in the assembly of 30S ribosomal subunit, possibly for assembly of the head region. Essential for efficient processing of 16S rRNA. May be needed both before and after RbfA during the maturation of 16S rRNA. It has affinity for free ribosomal 30S subunits but not for 70S ribosomes. This chain is Ribosome maturation factor RimM, found in Buchnera aphidicola subsp. Cinara cedri (strain Cc).